A 301-amino-acid polypeptide reads, in one-letter code: MKIRSKDLLTGAELDRKEILGIIESAIRLKKGGRSKAHPLDGRTLAMVFQKPSTRTRVSFAAGMFQLGGEAIYLPPGDMQLSRGETIPDTARALSGYVDVIVARVFGHETIEEIAASASVPVINGLSDTFHPCQILADLMTIKERKGRLKGLRAAWIGDGNNVCNSLLYGCAAVGIDISVATPAVFRPIPGVVDKCRESIDVKLTTDPAEAAAGADIVFTDTFASIHNMDKERERKFLPKYRVNAPLMKKAADDAIFMHCLPAKRGQEVDGEVIDGPQSAVWDEAENRLHSQKALLLALGI.

Residues serine 53–threonine 56, glutamine 80, arginine 104, and histidine 131–glutamine 134 each bind carbamoyl phosphate. L-ornithine is bound by residues asparagine 162, aspartate 221, and serine 225–isoleucine 226. Carbamoyl phosphate is bound by residues cysteine 260–leucine 261 and arginine 288.

The protein belongs to the aspartate/ornithine carbamoyltransferase superfamily. OTCase family.

The protein localises to the cytoplasm. The enzyme catalyses carbamoyl phosphate + L-ornithine = L-citrulline + phosphate + H(+). It functions in the pathway amino-acid biosynthesis; L-arginine biosynthesis; L-arginine from L-ornithine and carbamoyl phosphate: step 1/3. In terms of biological role, reversibly catalyzes the transfer of the carbamoyl group from carbamoyl phosphate (CP) to the N(epsilon) atom of ornithine (ORN) to produce L-citrulline. This Cenarchaeum symbiosum (strain A) protein is Ornithine carbamoyltransferase.